The chain runs to 217 residues: MQFLIPVVILCVSLVDSQKVLYNNEIGFNNGFYYAFWKDSGSATFTLESGGRYAGNWTTSTNNWVGGKGWNPGNSWRTVNYSGYYGINEYANSYLSLYGWTTNPLIEYYVVESYGSYSPLNCPGGTDEGSFTSGGATYQVRKCRRTNAPSIIGTQSFDQYFSVRTPKKGFGQVSGSVNFADHVQYWASKGLPLGTHAHQIFATEGYQSSGFADITVS.

Residues 1–17 (MQFLIPVVILCVSLVDS) form the signal peptide. Positions 20-217 (VLYNNEIGFN…SSGFADITVS (198 aa)) constitute a GH11 domain. Residues Asn56 and Asn80 are each glycosylated (N-linked (GlcNAc...) asparagine). Glu107 serves as the catalytic Nucleophile. Residue Glu204 is the Proton donor of the active site.

Belongs to the glycosyl hydrolase 11 (cellulase G) family. As to expression, expressed in larval carcasses and gut, and adult gut.

The protein resides in the secreted. It catalyses the reaction Endohydrolysis of (1-&gt;4)-beta-D-xylosidic linkages in xylans.. The protein operates within glycan degradation; xylan degradation. The protein is Endo-1,4-beta-xylanase of Phaedon cochleariae (Mustard beetle).